Reading from the N-terminus, the 130-residue chain is Translation initiation factor 5A (130 aa).

Position 36 is a hypusine (Lys-36).

Belongs to the eIF-5A family.

The protein localises to the cytoplasm. Its function is as follows. Functions by promoting the formation of the first peptide bond. In Methanothermobacter thermautotrophicus (strain ATCC 29096 / DSM 1053 / JCM 10044 / NBRC 100330 / Delta H) (Methanobacterium thermoautotrophicum), this protein is Translation initiation factor 5A (eif5a).